The sequence spans 217 residues: Killer cell lectin-like receptor subfamily B member 1F (217 aa).

Topologically, residues 1 to 45 (MDTSKVHGNVKPFRCPGYKQASSPSFSPDACRCPHWHHLALKSGC) are cytoplasmic. Positions 31-34 (CRCP) match the LCK-binding motif motif. The chain crosses the membrane as a helical; Signal-anchor for type II membrane protein span at residues 46 to 66 (AGLILLLLSLIGLSVLVRFLV). The Extracellular segment spans residues 67–217 (QKPPIEKCSV…WICQKTLIHV (151 aa)). Residue Asn81 is glycosylated (N-linked (GlcNAc...) asparagine). Residues 101 to 211 (HWNKCLFVSQ…CSSDNHWICQ (111 aa)) enclose the C-type lectin domain. 2 cysteine pairs are disulfide-bonded: Cys122-Cys210 and Cys189-Cys202.

Highly expressed in dendritic cells. Detectable in natural killer cells.

It is found in the membrane. In terms of biological role, binds CLEC2I/Clr-g leading to activation of natural killer cells or costimulation of IL-2 production and proliferation of T-cells in response to antigen stimulation. May contribute to the formation of the immunological synapse between T-cells and antigen-presenting dendritic cells. This chain is Killer cell lectin-like receptor subfamily B member 1F (Klrb1f), found in Mus musculus (Mouse).